The chain runs to 345 residues: MTTQRLVSAAGQWDEEAIDRAIRPKRLEDYVGQRAMREQMAIFIQAALGRGEALDHVLIFGPPGLGKTTLANIIANELGVNVRHTSGPVLEKAGDLAALLTNLEPRDVLFIDEIHRLGAVVEEVLYPAMEDYQIDIMIGEGPAARSIKLDLPPFTLVGATTRAGLLTSPLRDRFGIVHRLEFYSVEELSRIVARSARILGSEITPEGAAEVARRSRGTPRIANRLLRRVRDFAQVMADGRITGEVAGKALEMLDVDPNGFDQSDRRLLLTMMEKFEGGPVGLDNLAAAIGEERGTIEDVLEPYLIQQGFIMRTPRGRVATRNAYLHFGLKPPQRTNVNEELFGDE.

Positions 1–183 (MTTQRLVSAA…FGIVHRLEFY (183 aa)) are large ATPase domain (RuvB-L). Residues Ile22, Arg23, Gly64, Lys67, Thr68, Thr69, 130 to 132 (EDY), Arg173, Tyr183, and Arg220 contribute to the ATP site. Residue Thr68 participates in Mg(2+) binding. Residues 184-254 (SVEELSRIVA…VAGKALEMLD (71 aa)) form a small ATPAse domain (RuvB-S) region. The segment at 257–345 (PNGFDQSDRR…NVNEELFGDE (89 aa)) is head domain (RuvB-H). 3 residues coordinate DNA: Arg293, Arg312, and Arg317.

This sequence belongs to the RuvB family. Homohexamer. Forms an RuvA(8)-RuvB(12)-Holliday junction (HJ) complex. HJ DNA is sandwiched between 2 RuvA tetramers; dsDNA enters through RuvA and exits via RuvB. An RuvB hexamer assembles on each DNA strand where it exits the tetramer. Each RuvB hexamer is contacted by two RuvA subunits (via domain III) on 2 adjacent RuvB subunits; this complex drives branch migration. In the full resolvosome a probable DNA-RuvA(4)-RuvB(12)-RuvC(2) complex forms which resolves the HJ.

The protein resides in the cytoplasm. It carries out the reaction ATP + H2O = ADP + phosphate + H(+). In terms of biological role, the RuvA-RuvB-RuvC complex processes Holliday junction (HJ) DNA during genetic recombination and DNA repair, while the RuvA-RuvB complex plays an important role in the rescue of blocked DNA replication forks via replication fork reversal (RFR). RuvA specifically binds to HJ cruciform DNA, conferring on it an open structure. The RuvB hexamer acts as an ATP-dependent pump, pulling dsDNA into and through the RuvAB complex. RuvB forms 2 homohexamers on either side of HJ DNA bound by 1 or 2 RuvA tetramers; 4 subunits per hexamer contact DNA at a time. Coordinated motions by a converter formed by DNA-disengaged RuvB subunits stimulates ATP hydrolysis and nucleotide exchange. Immobilization of the converter enables RuvB to convert the ATP-contained energy into a lever motion, pulling 2 nucleotides of DNA out of the RuvA tetramer per ATP hydrolyzed, thus driving DNA branch migration. The RuvB motors rotate together with the DNA substrate, which together with the progressing nucleotide cycle form the mechanistic basis for DNA recombination by continuous HJ branch migration. Branch migration allows RuvC to scan DNA until it finds its consensus sequence, where it cleaves and resolves cruciform DNA. The sequence is that of Holliday junction branch migration complex subunit RuvB from Methylococcus capsulatus (strain ATCC 33009 / NCIMB 11132 / Bath).